A 231-amino-acid chain; its full sequence is Small ribosomal subunit protein bS18c (231 aa).

Disordered stretches follow at residues 1–31 and 95–231; these read MEKS…PIES and QKEE…TRKK. Residues 9 to 26 are compositionally biased toward basic residues; that stretch reads IKKKRPFRKKKRSFRKRR. Composition is skewed to basic and acidic residues over residues 95–151, 159–169, and 212–231; these read QKEE…EFQR, TNEKQTNEKQT, and TNEK…TRKK.

The protein belongs to the bacterial ribosomal protein bS18 family. In terms of assembly, part of the 30S ribosomal subunit.

Its subcellular location is the plastid. The protein localises to the chloroplast. This Jasminum nudiflorum (Winter jasmine) protein is Small ribosomal subunit protein bS18c.